The following is a 1192-amino-acid chain: Methionine synthase (1192 aa).

The 312-residue stretch at 1 to 312 (MTAADKHLYD…AHIREVAAAV (312 aa)) folds into the Hcy-binding domain. Residues Cys-231, Cys-297, and Cys-298 each contribute to the Zn(2+) site. The 259-residue stretch at 343–601 (VLVIGERTNA…RIPEEQRNVA (259 aa)) folds into the Pterin-binding domain. In terms of domain architecture, B12-binding N-terminal spans 635–728 (RLAELAGLPL…HMERSDDDSG (94 aa)). The region spanning 729–866 (KGRIVLATVK…SAKRGEAPDE (138 aa)) is the B12-binding domain. Methylcob(III)alamin contacts are provided by residues 739-743 (GDVHD), His-742, Ser-787, and Ala-845. The disordered stretch occupies residues 860-904 (RGEAPDENSPEAIKAREKEAERKARHQRSKRIAAQRKAAEEPVEV). Basic and acidic residues predominate over residues 872-881 (IKAREKEAER). Residues 882–893 (KARHQRSKRIAA) show a composition bias toward basic residues. In terms of domain architecture, AdoMet activation spans 893 to 1192 (AQRKAAEEPV…HHPEAKYFNV (300 aa)). S-adenosyl-L-methionine-binding positions include Asp-940, Arg-1135, and 1189–1190 (YF).

It belongs to the vitamin-B12 dependent methionine synthase family. It depends on methylcob(III)alamin as a cofactor. Requires Zn(2+) as cofactor.

It catalyses the reaction (6S)-5-methyl-5,6,7,8-tetrahydrofolate + L-homocysteine = (6S)-5,6,7,8-tetrahydrofolate + L-methionine. Its pathway is amino-acid biosynthesis; L-methionine biosynthesis via de novo pathway; L-methionine from L-homocysteine (MetH route): step 1/1. Its function is as follows. Catalyzes the transfer of a methyl group from methyl-cobalamin to homocysteine, yielding enzyme-bound cob(I)alamin and methionine. Subsequently, remethylates the cofactor using methyltetrahydrofolate. The sequence is that of Methionine synthase (metH) from Mycobacterium tuberculosis (strain ATCC 25618 / H37Rv).